A 95-amino-acid polypeptide reads, in one-letter code: Large ribosomal subunit protein bL25 (95 aa).

Belongs to the bacterial ribosomal protein bL25 family. In terms of assembly, part of the 50S ribosomal subunit; part of the 5S rRNA/L5/L18/L25 subcomplex. Contacts the 5S rRNA. Binds to the 5S rRNA independently of L5 and L18.

Functionally, this is one of the proteins that binds to the 5S RNA in the ribosome where it forms part of the central protuberance. This is Large ribosomal subunit protein bL25 from Yersinia enterocolitica serotype O:8 / biotype 1B (strain NCTC 13174 / 8081).